The primary structure comprises 356 residues: Phosphoribosylformylglycinamidine cyclo-ligase (356 aa).

The protein belongs to the AIR synthase family.

The protein localises to the cytoplasm. It catalyses the reaction 2-formamido-N(1)-(5-O-phospho-beta-D-ribosyl)acetamidine + ATP = 5-amino-1-(5-phospho-beta-D-ribosyl)imidazole + ADP + phosphate + H(+). It functions in the pathway purine metabolism; IMP biosynthesis via de novo pathway; 5-amino-1-(5-phospho-D-ribosyl)imidazole from N(2)-formyl-N(1)-(5-phospho-D-ribosyl)glycinamide: step 2/2. In Acinetobacter baumannii (strain AB307-0294), this protein is Phosphoribosylformylglycinamidine cyclo-ligase.